The primary structure comprises 677 residues: Pannexin-2 (677 aa).

The Cytoplasmic portion of the chain corresponds to Met11–Glu47. A helical membrane pass occupies residues Leu48–Phe70. The Extracellular segment spans residues Thr71–Phe123. Asn86 carries N-linked (GlcNAc...) asparagine glycosylation. A helical transmembrane segment spans residues Leu124 to Ala146. The Cytoplasmic segment spans residues Ser147–Leu226. The chain crosses the membrane as a helical span at residues Tyr227–Tyr249. The Extracellular portion of the chain corresponds to Ala250 to Gly292. Residues Val293–Phe315 traverse the membrane as a helical segment. The Cytoplasmic segment spans residues Arg316–Arg643. Disordered regions lie at residues Ala393–Val423 and Asn454–Ala510. Positions Gly492–Ala504 are enriched in pro residues. Ser593 carries the post-translational modification Phosphoserine.

Belongs to the pannexin family. In terms of assembly, homoheptameric. Post-translationally, S-palmitoylated in neural stem and progenitor cells. In terms of processing, cleaved by CASP3 and CASP7 during apoptosis. Cleavage has no effect on it function.

It is found in the cell membrane. Its subcellular location is the golgi apparatus membrane. It localises to the endoplasmic reticulum membrane. It carries out the reaction ATP(in) = ATP(out). The catalysed reaction is chloride(in) = chloride(out). The enzyme catalyses iodide(out) = iodide(in). It catalyses the reaction Na(+)(in) = Na(+)(out). It carries out the reaction D-gluconate(in) = D-gluconate(out). In terms of biological role, ion channel with a slight anion preference. Also able to release ATP. Plays a role in regulating neurogenesis and apoptosis in keratinocytes. This chain is Pannexin-2, found in Homo sapiens (Human).